Here is a 284-residue protein sequence, read N- to C-terminus: Nucleotide-binding protein Sputcn32_0712 (284 aa).

8-15 (GRSGSGKS) is a binding site for ATP. Residue 56–59 (DVRN) coordinates GTP.

The protein belongs to the RapZ-like family.

In terms of biological role, displays ATPase and GTPase activities. This is Nucleotide-binding protein Sputcn32_0712 from Shewanella putrefaciens (strain CN-32 / ATCC BAA-453).